Consider the following 348-residue polypeptide: Nitrogenase vanadium-iron protein beta chain (348 aa).

Positions 31, 56, 115, and 153 each coordinate [8Fe-7S] cluster.

It belongs to the NifD/NifK/NifE/NifN family. As to quaternary structure, hexamer of two alpha, two beta, and two delta chains. The cofactor is [8Fe-7S] cluster.

The enzyme catalyses N2 + 8 reduced [2Fe-2S]-[ferredoxin] + 16 ATP + 16 H2O = H2 + 8 oxidized [2Fe-2S]-[ferredoxin] + 2 NH4(+) + 16 ADP + 16 phosphate + 6 H(+). In terms of biological role, this vanadium-iron protein is part of the nitrogenase complex that catalyzes the key enzymatic reactions in nitrogen fixation. In Azotobacter salinestris, this protein is Nitrogenase vanadium-iron protein beta chain (vnfK).